The following is a 79-amino-acid chain: Pigment-dispersing hormone type 1 (79 aa).

A signal peptide spans 1-22 (MRSAVVVALLVMVAMSLQLTAA). The residue at position 76 (Ala-76) is an Alanine amide.

This sequence belongs to the arthropod PDH family. In terms of tissue distribution, eyestalk.

It is found in the secreted. Functionally, the pigment-dispersing hormone causes the migration of the distal retinal pigment into the proximal end of the pigment chromatophore cells and thus decreases the amount of light entering the retinulas. May also function as a neurotransmitter and/or neuromodulator. In Penaeus vannamei (Whiteleg shrimp), this protein is Pigment-dispersing hormone type 1 (PDH1).